The sequence spans 259 residues: GTP cyclohydrolase FolE2 (259 aa).

This sequence belongs to the GTP cyclohydrolase IV family.

It carries out the reaction GTP + H2O = 7,8-dihydroneopterin 3'-triphosphate + formate + H(+). The protein operates within cofactor biosynthesis; 7,8-dihydroneopterin triphosphate biosynthesis; 7,8-dihydroneopterin triphosphate from GTP: step 1/1. Functionally, converts GTP to 7,8-dihydroneopterin triphosphate. The chain is GTP cyclohydrolase FolE2 from Halorhodospira halophila (strain DSM 244 / SL1) (Ectothiorhodospira halophila (strain DSM 244 / SL1)).